A 569-amino-acid polypeptide reads, in one-letter code: MGVVRVQHETKMENQSWLKKLARRLGPGHVVNLCFIVVLLFSTLLTWREVVVLEDAYISSQRNHLENVANALDKHLQYNVDKLIFLRNGMREALVAPLDFTSLRNAVTEFEQHRDEHAWQIELNRRRTLSVNGVSDALVSEGNLLSRENESLDNEITAALEVGYLLRLAHNTSSMVEQAMYVSRAGFYVSTQPTLFTRNVPTRYYGYVTQPWFIGHSQRENRHRAVRWFTSQPEHASNTEPQVTVSVPVDSNNYWYGVLGMSIPVRTMQQFLRNAIDKNLDGEYQLYDSKLRFLTSSNPDHPTGNIFDPRELALLAQAMEHDTRGGIRMDSRYVSWERLDHFDGVLVRVHTLSEGVRGDFGSISIALTLLWALFTTMLLISWYVIRRMVSNMYVLQSSLQWQAWHDTLTRLYNRGALFEKARPLAKLCQTHQHPFSVIQVDLDHFKAINDRFGHQAGDRVLSHAAGLISSSLRAQDVAGRVGGEEFCVILPGASLTEAAEVAERIRLKLNEKEMLIAKSTTIRISASLGVSSSEETGDYDFEQLQSLADRRLYLAKQAGRNRVCASDNA.

Helical transmembrane passes span 25–45 and 365–385; these read LGPG…STLL and IALT…WYVI. The 136-residue stretch at 433 to 568 folds into the GGDEF domain; sequence HPFSVIQVDL…GRNRVCASDN (136 aa). Residue Asp441 participates in Mg(2+) binding. 3 residues coordinate substrate: Asn449, His454, and Asp458. Glu484 is a binding site for Mg(2+). The active-site Proton acceptor is the Glu484.

As to quaternary structure, homodimer. The cofactor is Mg(2+).

The protein resides in the cell inner membrane. The enzyme catalyses 2 GTP = 3',3'-c-di-GMP + 2 diphosphate. It functions in the pathway glycan metabolism; bacterial cellulose biosynthesis. Its pathway is purine metabolism; 3',5'-cyclic di-GMP biosynthesis. In terms of biological role, catalyzes the synthesis of cyclic-di-GMP (c-di-GMP) via the condensation of 2 GTP molecules. Cyclic-di-GMP is a second messenger which controls cell surface-associated traits in bacteria. Involved in the regulation of cellulose production. The polypeptide is Probable diguanylate cyclase DgcQ (Shigella sonnei (strain Ss046)).